We begin with the raw amino-acid sequence, 267 residues long: Glutamate racemase (267 aa).

Substrate is bound by residues Asp-13 to Ser-14 and Tyr-45 to Ser-46. Cys-77 (proton donor/acceptor) is an active-site residue. Asn-78–Thr-79 lines the substrate pocket. Cys-188 serves as the catalytic Proton donor/acceptor. Thr-189 to His-190 serves as a coordination point for substrate.

It belongs to the aspartate/glutamate racemases family.

It carries out the reaction L-glutamate = D-glutamate. It participates in cell wall biogenesis; peptidoglycan biosynthesis. Its function is as follows. Provides the (R)-glutamate required for cell wall biosynthesis. In Histophilus somni (strain 129Pt) (Haemophilus somnus), this protein is Glutamate racemase.